Here is a 592-residue protein sequence, read N- to C-terminus: Syntaxin-binding protein 3 (592 aa).

The interval 1 to 255 is mediates interaction with DOC2B; sequence MAPPVSERGL…STVLHELTFQ (255 aa).

The protein belongs to the STXBP/unc-18/SEC1 family. Interacts with STX4. Interacts with DOC2B; the interaction is direct, occurs at the cell membrane, excludes interaction with STX4 and regulates glucose-stimulated insulin secretion. Phosphorylated by PKC in platelets in response to thrombin stimulation; phosphorylation inhibits binding to STX4. Ubiquitously expressed in all tissues tested.

Its subcellular location is the cytoplasm. The protein localises to the cytosol. It localises to the cell membrane. In terms of biological role, together with STX4 and VAMP2, may play a role in insulin-dependent movement of GLUT4 and in docking/fusion of intracellular GLUT4-containing vesicles with the cell surface in adipocytes. This chain is Syntaxin-binding protein 3 (Stxbp3), found in Mus musculus (Mouse).